The following is a 37-amino-acid chain: uncharacterized protein (37 aa).

The chain crosses the membrane as a helical span at residues 17-37 (TFVLIVVLFILLIIVGAAFIC).

The protein belongs to the SscA family.

It localises to the membrane. This is an uncharacterized protein from Bacillus subtilis (strain 168).